The chain runs to 65 residues: Dybowskin-2CDYa (65 aa).

The signal sequence occupies residues 1 to 22 (MFTLKKSLLLLFFIGVIKLSLC). Residues 23-47 (EEERNADDDERRDDPDEMDVEVENR) constitute a propeptide that is removed on maturation. Residues 26–43 (RNADDDERRDDPDEMDVE) are compositionally biased toward acidic residues. A disordered region spans residues 26–65 (RNADDDERRDDPDEMDVEVENRSAVGRHGRRFGLRKHRKH). Residues 50-65 (VGRHGRRFGLRKHRKH) show a composition bias toward basic residues.

Belongs to the frog skin active peptide (FSAP) family. Brevinin subfamily. In terms of tissue distribution, expressed by the skin glands.

It is found in the secreted. Functionally, antimicrobial peptide. Has activity against the Gram-positive bacterium S.aureus (MIC=6 uM) and the Gram-negative bacterium E.coli (MIC=3 uM). Lacks hemolytic activity against human erythrocytes. The sequence is that of Dybowskin-2CDYa from Rana dybowskii (Dybovsky's frog).